The chain runs to 465 residues: SET domain-containing protein 3 (465 aa).

The SET domain occupies 18-265 (DKVTVKWDKK…AREELLDSYG (248 aa)).

The protein belongs to the class V-like SAM-binding methyltransferase superfamily.

This is SET domain-containing protein 3 (set-3) from Caenorhabditis elegans.